Here is a 238-residue protein sequence, read N- to C-terminus: tRNA (guanine-N(7)-)-methyltransferase (238 aa).

The S-adenosyl-L-methionine site is built by glutamate 70, aspartate 95, aspartate 122, and aspartate 145. Residue aspartate 145 is part of the active site. Substrate-binding positions include lysine 149, aspartate 181, and 216–219; that span reads TKFE.

The protein belongs to the class I-like SAM-binding methyltransferase superfamily. TrmB family.

The catalysed reaction is guanosine(46) in tRNA + S-adenosyl-L-methionine = N(7)-methylguanosine(46) in tRNA + S-adenosyl-L-homocysteine. It participates in tRNA modification; N(7)-methylguanine-tRNA biosynthesis. Catalyzes the formation of N(7)-methylguanine at position 46 (m7G46) in tRNA. This is tRNA (guanine-N(7)-)-methyltransferase from Neisseria gonorrhoeae (strain ATCC 700825 / FA 1090).